The sequence spans 224 residues: Polyadenylate-binding protein 2 (224 aa).

Residues 1-36 (MADEDITLNEDQLLESLEETNGEQETEIATEVEEEG) show a composition bias toward acidic residues. The segment at 1-40 (MADEDITLNEDQLLESLEETNGEQETEIATEVEEEGSMQI) is disordered. A coiled-coil region spans residues 9–74 (NEDQLLESLE…QSEVDKQMAG (66 aa)). The RRM domain maps to 96–173 (RSVYVGNVDY…RQIKVMSKRT (78 aa)).

Interacts with ZC3H3. In terms of tissue distribution, expressed ubiquitously in all transcriptionally active cells.

It is found in the nucleus. The protein resides in the cytoplasm. Functionally, involved in the 3'-end formation of mRNA precursors (pre-mRNA) by the addition of a poly(A) tail of 200-250 nt to the upstream cleavage product. Stimulates poly(A) polymerase (PAPOLA) conferring processivity on the poly(A) tail elongation reaction and also controls the poly(A) tail length. Increases the affinity of poly(A) polymerase for RNA. Binds to poly(A) and to poly(G) with high affinity. May protect the poly(A) tail from degradation. Plays a role in the positive regulation of alpha-1,3 fucosylation, possibly by cooperating with swm which regulates nuclear export of fucosyltransferase FucTA. Involved in germline stem cell transit amplification, differentiation and mitosis-to-meiosis transition. The polypeptide is Polyadenylate-binding protein 2 (Drosophila melanogaster (Fruit fly)).